The chain runs to 117 residues: Hydrogenase maturation factor HypA (117 aa).

H2 contacts Ni(2+). 4 residues coordinate Zn(2+): C73, C76, C92, and C95.

The protein belongs to the HypA/HybF family.

Its function is as follows. Involved in the maturation of [NiFe] hydrogenases. Required for nickel insertion into the metal center of the hydrogenase. The sequence is that of Hydrogenase maturation factor HypA from Solidesulfovibrio magneticus (strain ATCC 700980 / DSM 13731 / RS-1) (Desulfovibrio magneticus).